A 510-amino-acid polypeptide reads, in one-letter code: NAD(P)H-quinone oxidoreductase subunit 2 A, chloroplastic (510 aa).

The next 13 helical transmembrane spans lie at 24–44, 57–77, 99–119, 124–144, 149–169, 183–203, 227–247, 295–315, 323–343, 354–374, 395–415, 418–438, and 484–504; these read LLLFDGSLIFPECILIFGLIL, IPWLYFISSTSLVLSITALLF, IFQFLILLCSTLCIPLSVEYI, MAITEFLLFVLTATLGGMFLC, LITIFVAPECFSLCSYLLSGY, YLLMGGASSSILVHGFSWLYG, PGISIALIFITVGIGFKLSPA, WHLLLEILAILSMILGNLIAI, MLAYSSIGQIGYVIIGIIVGD, YMLFYISMNLGTFACIVLFGL, ALSLALCLLSLGGLPPLAGFF, LYLFWCGWQAGLYFLVLIGLL, and MIVCVIASTIPGISMNPIIAI.

Belongs to the complex I subunit 2 family. As to quaternary structure, NDH is composed of at least 16 different subunits, 5 of which are encoded in the nucleus.

The protein resides in the plastid. It is found in the chloroplast thylakoid membrane. It catalyses the reaction a plastoquinone + NADH + (n+1) H(+)(in) = a plastoquinol + NAD(+) + n H(+)(out). The enzyme catalyses a plastoquinone + NADPH + (n+1) H(+)(in) = a plastoquinol + NADP(+) + n H(+)(out). Its function is as follows. NDH shuttles electrons from NAD(P)H:plastoquinone, via FMN and iron-sulfur (Fe-S) centers, to quinones in the photosynthetic chain and possibly in a chloroplast respiratory chain. The immediate electron acceptor for the enzyme in this species is believed to be plastoquinone. Couples the redox reaction to proton translocation, and thus conserves the redox energy in a proton gradient. This chain is NAD(P)H-quinone oxidoreductase subunit 2 A, chloroplastic, found in Solanum tuberosum (Potato).